The sequence spans 356 residues: Alanine racemase, catabolic (356 aa).

Catalysis depends on Lys35, which acts as the Proton acceptor; specific for D-alanine. Lys35 carries the N6-(pyridoxal phosphate)lysine modification. Arg130 is a binding site for substrate. The Proton acceptor; specific for L-alanine role is filled by Tyr253. Met301 serves as a coordination point for substrate.

It belongs to the alanine racemase family. Pyridoxal 5'-phosphate is required as a cofactor.

The catalysed reaction is L-alanine = D-alanine. Functionally, isomerizes L-alanine to D-alanine which is then oxidized to pyruvate by DadA. The polypeptide is Alanine racemase, catabolic (dadX) (Salmonella typhi).